A 358-amino-acid polypeptide reads, in one-letter code: Glutamate--cysteine ligase (358 aa).

The protein belongs to the glutamate--cysteine ligase type 2 family. YbdK subfamily.

The enzyme catalyses L-cysteine + L-glutamate + ATP = gamma-L-glutamyl-L-cysteine + ADP + phosphate + H(+). Its function is as follows. Catalyzes the synthesis of gamma-glutamylcysteine (gamma-GC), the main low-molecular-weight thiol compound instead of glutathione in halophilic archaea. This is Glutamate--cysteine ligase from Haloferax volcanii (strain ATCC 29605 / DSM 3757 / JCM 8879 / NBRC 14742 / NCIMB 2012 / VKM B-1768 / DS2) (Halobacterium volcanii).